The primary structure comprises 407 residues: Zinc finger protein 260 (407 aa).

The segment at 1–21 (MLESLQPESELLHDEPDPGEK) is disordered. Residues 10-21 (ELLHDEPDPGEK) show a composition bias toward basic and acidic residues. The C2H2-type 1 zinc-finger motif lies at 23–45 (YECDECRKTFSLEQHFVEHKKTH). The C2H2-type 2; degenerate zinc finger occupies 51–73 (PECTGCGEEFSKASSLTRHLRSR). 11 consecutive C2H2-type zinc fingers follow at residues 79–101 (YKCG…QKQH), 131–153 (YACK…EKIH), 159–181 (FECN…QNVH), 187–209 (FKCN…QRIH), 215–237 (YECK…QRSH), 243–265 (YTCK…EKIH), 271–293 (YKCN…HNIH), 299–321 (YECN…VRIH), 327–349 (YECK…MRSH), 355–377 (YGCN…MRIH), and 383–405 (YQCS…QRIH).

This sequence belongs to the krueppel C2H2-type zinc-finger protein family. In terms of assembly, binds DNA. Interacts with GATA4. In terms of tissue distribution, expressed in both embryonic, fetal and adult heart. Also expressed in lung, skeletal muscle and adrenal glands.

It localises to the nucleus. Its function is as follows. Transcription factor that acts as a cardiac regulator and an effector of alpha1-adrenergic signaling. Binds to PE response elements (PERE) present in the promoter of genes such as ANF/NPPA and acts as a direct transcriptional activator of NPPA. Also acts as a cofactor with GATA4, a key cardiac regulator. This Rattus norvegicus (Rat) protein is Zinc finger protein 260 (Znf260).